The chain runs to 53 residues: MKVVIFIFALLATICAAFAYVPLPNVPQPGRRPFPTFPGQGPFNPKIKWPQGY.

Positions 1 to 19 (MKVVIFIFALLATICAAFA) are cleaved as a signal peptide.

It localises to the secreted. In terms of biological role, this peptide has bactericidal activity. This Apis mellifera (Honeybee) protein is Abaecin.